The primary structure comprises 104 residues: Salivary protein FS145 (104 aa).

The N-terminal stretch at 1 to 18 (MKLFAVFLLFCLVNQIYC) is a signal peptide. Disulfide bonds link Cys-32/Cys-80, Cys-62/Cys-89, Cys-72/Cys-100, and Cys-76/Cys-102. The Putative integrin attachment site; atypical (WGD) motif lies at 92-94 (WGD).

As to quaternary structure, interacts with host integrin alpha-V/beta-3 (ITGAV:ITGB3).

It is found in the secreted. In terms of biological role, inhibits proliferation, adhesion and migration of host cells as well as host angiogenesis by blocking host integrin alpha-V/beta-3 (ITGAV:ITGB3). The chain is Salivary protein FS145 from Xenopsylla cheopis (Oriental rat flea).